The sequence spans 274 residues: 2,3,4,5-tetrahydropyridine-2,6-dicarboxylate N-succinyltransferase (274 aa).

Belongs to the transferase hexapeptide repeat family.

Its subcellular location is the cytoplasm. The enzyme catalyses (S)-2,3,4,5-tetrahydrodipicolinate + succinyl-CoA + H2O = (S)-2-succinylamino-6-oxoheptanedioate + CoA. It participates in amino-acid biosynthesis; L-lysine biosynthesis via DAP pathway; LL-2,6-diaminopimelate from (S)-tetrahydrodipicolinate (succinylase route): step 1/3. This is 2,3,4,5-tetrahydropyridine-2,6-dicarboxylate N-succinyltransferase from Escherichia fergusonii (strain ATCC 35469 / DSM 13698 / CCUG 18766 / IAM 14443 / JCM 21226 / LMG 7866 / NBRC 102419 / NCTC 12128 / CDC 0568-73).